We begin with the raw amino-acid sequence, 285 residues long: 4-hydroxybenzoate octaprenyltransferase (285 aa).

A run of 8 helical transmembrane segments spans residues 28 to 48 (LWALWMAAGGPPALSVFCIFF), 86 to 106 (IAAWEAVLIAAVLALIAFALI), 110 to 130 (NSLTKWLAVVAAVVAGTYPFF), 133 to 153 (FFAIPQAYLGIAFGFGIPMAF), 160 to 180 (VPLVAWVMLLANVFWAVAYDT), 207 to 227 (VAAIMLCYAAFLVLMGWAGVM), 232 to 252 (WPYWVGLAAAAVCAGYHYTLI), and 262 to 284 (AAFRHNNWLGACVFAGTAVAYAI).

Belongs to the UbiA prenyltransferase family. Mg(2+) serves as cofactor.

The protein localises to the cell inner membrane. The catalysed reaction is all-trans-octaprenyl diphosphate + 4-hydroxybenzoate = 4-hydroxy-3-(all-trans-octaprenyl)benzoate + diphosphate. It functions in the pathway cofactor biosynthesis; ubiquinone biosynthesis. Its function is as follows. Catalyzes the prenylation of para-hydroxybenzoate (PHB) with an all-trans polyprenyl group. Mediates the second step in the final reaction sequence of ubiquinone-8 (UQ-8) biosynthesis, which is the condensation of the polyisoprenoid side chain with PHB, generating the first membrane-bound Q intermediate 3-octaprenyl-4-hydroxybenzoate. This Cupriavidus pinatubonensis (strain JMP 134 / LMG 1197) (Cupriavidus necator (strain JMP 134)) protein is 4-hydroxybenzoate octaprenyltransferase.